Consider the following 303-residue polypeptide: Bifunctional protein FolD (303 aa).

NADP(+)-binding positions include 175–177 (GVS) and Ile243.

This sequence belongs to the tetrahydrofolate dehydrogenase/cyclohydrolase family. Homodimer.

The catalysed reaction is (6R)-5,10-methylene-5,6,7,8-tetrahydrofolate + NADP(+) = (6R)-5,10-methenyltetrahydrofolate + NADPH. The enzyme catalyses (6R)-5,10-methenyltetrahydrofolate + H2O = (6R)-10-formyltetrahydrofolate + H(+). It participates in one-carbon metabolism; tetrahydrofolate interconversion. Functionally, catalyzes the oxidation of 5,10-methylenetetrahydrofolate to 5,10-methenyltetrahydrofolate and then the hydrolysis of 5,10-methenyltetrahydrofolate to 10-formyltetrahydrofolate. This Xanthomonas euvesicatoria pv. vesicatoria (strain 85-10) (Xanthomonas campestris pv. vesicatoria) protein is Bifunctional protein FolD.